We begin with the raw amino-acid sequence, 83 residues long: Defensin-1 (83 aa).

A signal peptide spans 1 to 33 (MAGKGVGSRLSTLFLLVLLVITIGMMQVQVAEG). Disulfide bonds link C36–C82, C47–C67, C53–C76, and C57–C78.

Belongs to the DEFL family.

Its subcellular location is the secreted. Plant defense peptide. Has antifungal activity against B.cinera, F.oxysporum, F.solani and H.annosum with IC(50) values of 0.4 ug/ml, 2.9 ug/ml, 0.9 ug/ml and 1.4 ug/ml, respectively. Has modest antifungal activity against C.albicans and T.reesei. Causes thickening of F.oxysporum hyphae and an increase in their branching. Lacks antibacterial activity against the Gram-negative bacteria E.coli and E.carotovora. The polypeptide is Defensin-1 (Pinus sylvestris (Scotch pine)).